The sequence spans 115 residues: DNA-binding protein TV0008 (115 aa).

The tract at residues 18 to 37 (LQRQAMQRQMAEEEEKQREI) is disordered.

The protein belongs to the PDCD5 family.

The sequence is that of DNA-binding protein TV0008 from Thermoplasma volcanium (strain ATCC 51530 / DSM 4299 / JCM 9571 / NBRC 15438 / GSS1).